We begin with the raw amino-acid sequence, 395 residues long: Elongation factor Tu (395 aa).

Residues 10-205 enclose the tr-type G domain; that stretch reads KVHMNVGTIG…TMDEYFKDPV (196 aa). The tract at residues 19–26 is G1; that stretch reads GHVDHGKT. A GTP-binding site is contributed by 19-26; sequence GHVDHGKT. Position 26 (Thr26) interacts with Mg(2+). The interval 60–64 is G2; it reads GITIN. A G3 region spans residues 81-84; the sequence is DCPG. GTP contacts are provided by residues 81–85 and 136–139; these read DCPGH and NKVD. The G4 stretch occupies residues 136-139; that stretch reads NKVD. The tract at residues 173 to 175 is G5; it reads SAF.

This sequence belongs to the TRAFAC class translation factor GTPase superfamily. Classic translation factor GTPase family. EF-Tu/EF-1A subfamily. In terms of assembly, monomer.

The protein localises to the cytoplasm. The catalysed reaction is GTP + H2O = GDP + phosphate + H(+). GTP hydrolase that promotes the GTP-dependent binding of aminoacyl-tRNA to the A-site of ribosomes during protein biosynthesis. In Treponema denticola (strain ATCC 35405 / DSM 14222 / CIP 103919 / JCM 8153 / KCTC 15104), this protein is Elongation factor Tu.